The primary structure comprises 302 residues: Ribose-5-phosphate isomerase (302 aa).

This sequence belongs to the ribose 5-phosphate isomerase family.

Its subcellular location is the cytoplasm. It carries out the reaction aldehydo-D-ribose 5-phosphate = D-ribulose 5-phosphate. It functions in the pathway carbohydrate degradation; pentose phosphate pathway; D-ribose 5-phosphate from D-ribulose 5-phosphate (non-oxidative stage): step 1/1. This chain is Ribose-5-phosphate isomerase (RKI1), found in Cryptococcus neoformans var. neoformans serotype D (strain B-3501A) (Filobasidiella neoformans).